A 652-amino-acid polypeptide reads, in one-letter code: tRNA 5-methylaminomethyl-2-thiouridine biosynthesis bifunctional protein MnmC (652 aa).

Residues methionine 1–serine 227 are tRNA (mnm(5)s(2)U34)-methyltransferase. Positions isoleucine 259–lysine 652 are FAD-dependent cmnm(5)s(2)U34 oxidoreductase.

In the N-terminal section; belongs to the methyltransferase superfamily. tRNA (mnm(5)s(2)U34)-methyltransferase family. The protein in the C-terminal section; belongs to the DAO family. The cofactor is FAD.

It localises to the cytoplasm. It catalyses the reaction 5-aminomethyl-2-thiouridine(34) in tRNA + S-adenosyl-L-methionine = 5-methylaminomethyl-2-thiouridine(34) in tRNA + S-adenosyl-L-homocysteine + H(+). In terms of biological role, catalyzes the last two steps in the biosynthesis of 5-methylaminomethyl-2-thiouridine (mnm(5)s(2)U) at the wobble position (U34) in tRNA. Catalyzes the FAD-dependent demodification of cmnm(5)s(2)U34 to nm(5)s(2)U34, followed by the transfer of a methyl group from S-adenosyl-L-methionine to nm(5)s(2)U34, to form mnm(5)s(2)U34. In Leptospira borgpetersenii serovar Hardjo-bovis (strain JB197), this protein is tRNA 5-methylaminomethyl-2-thiouridine biosynthesis bifunctional protein MnmC.